The primary structure comprises 1412 residues: DNA-directed RNA polymerase subunit beta' (1412 aa).

Zn(2+)-binding residues include Cys-70, Cys-72, Cys-85, and Cys-88. The Mg(2+) site is built by Asp-460, Asp-462, and Asp-464. Residues Cys-819, Cys-893, Cys-900, and Cys-903 each coordinate Zn(2+). Residues 1393–1412 (EAFEFGTPSAPAEEPQHPAE) form a disordered region.

This sequence belongs to the RNA polymerase beta' chain family. The RNAP catalytic core consists of 2 alpha, 1 beta, 1 beta' and 1 omega subunit. When a sigma factor is associated with the core the holoenzyme is formed, which can initiate transcription. Mg(2+) serves as cofactor. Zn(2+) is required as a cofactor.

The enzyme catalyses RNA(n) + a ribonucleoside 5'-triphosphate = RNA(n+1) + diphosphate. Its function is as follows. DNA-dependent RNA polymerase catalyzes the transcription of DNA into RNA using the four ribonucleoside triphosphates as substrates. The sequence is that of DNA-directed RNA polymerase subunit beta' from Burkholderia pseudomallei (strain 1106a).